Here is a 339-residue protein sequence, read N- to C-terminus: D-erythrose-4-phosphate dehydrogenase (339 aa).

An NAD(+)-binding site is contributed by 11 to 12; the sequence is RI. Residues 153-155, arginine 199, 212-213, and arginine 235 contribute to the substrate site; these read SCT and TK. The active-site Nucleophile is cysteine 154. Asparagine 317 serves as a coordination point for NAD(+).

It belongs to the glyceraldehyde-3-phosphate dehydrogenase family. Epd subfamily. Homotetramer.

It is found in the cytoplasm. The enzyme catalyses D-erythrose 4-phosphate + NAD(+) + H2O = 4-phospho-D-erythronate + NADH + 2 H(+). Its pathway is cofactor biosynthesis; pyridoxine 5'-phosphate biosynthesis; pyridoxine 5'-phosphate from D-erythrose 4-phosphate: step 1/5. In terms of biological role, catalyzes the NAD-dependent conversion of D-erythrose 4-phosphate to 4-phosphoerythronate. In Shewanella frigidimarina (strain NCIMB 400), this protein is D-erythrose-4-phosphate dehydrogenase.